Here is a 450-residue protein sequence, read N- to C-terminus: NADP-specific glutamate dehydrogenase (450 aa).

The active site involves lysine 114.

Belongs to the Glu/Leu/Phe/Val dehydrogenases family. In terms of assembly, homohexamer.

It catalyses the reaction L-glutamate + NADP(+) + H2O = 2-oxoglutarate + NH4(+) + NADPH + H(+). The sequence is that of NADP-specific glutamate dehydrogenase (gdhA) from Botryotinia fuckeliana (Noble rot fungus).